A 553-amino-acid chain; its full sequence is Transcription factor MYB65 (553 aa).

The segment at 1–44 (MSYTTATADSDDGMHSSIHNESPAPDSISNGCRSRGKRSVLKKG) is disordered. HTH myb-type domains lie at 38-90 (RSVL…ANHL) and 91-145 (RPNL…KRRQ). 2 DNA-binding regions (H-T-H motif) span residues 66–90 (WNAV…ANHL) and 118–141 (WAQM…NTRI).

In terms of tissue distribution, mostly expressed in roots (e.g. root tips), stems, pollen, shoot apices, flowers and floral shoot tips, and, to a lower extent, in leaves and siliques.

The protein resides in the nucleus. Functionally, transcriptional activator of alpha-amylase expression that binds to 5'-CAACTGTC-3' motif in target gene promoter. In vegetative tissues, inhibits growth by reducing cell proliferation. Promotes the expression of aleurone-related genes (e.g. CP1, CP, GASA1, BXL1 and BXL2) in seeds. Together with MYB33 and MYB101, promotes the programmed cell death (PCD) the vacuolation of protein storage vacuoles (PSVs) in the aleurone layers during seed germination. Together with MYB33, facilitates anther and tapetum development. In Arabidopsis thaliana (Mouse-ear cress), this protein is Transcription factor MYB65.